The chain runs to 445 residues: tRNA modification GTPase MnmE (445 aa).

Residues Arg-25, Glu-83, and Lys-121 each contribute to the (6S)-5-formyl-5,6,7,8-tetrahydrofolate site. The region spanning 217–371 (GVRVVILGPP…LLTLIQEKSR (155 aa)) is the TrmE-type G domain. Residues 227 to 232 (NAGKST), 246 to 252 (SEHPGTT), and 271 to 274 (DTAG) each bind GTP. The Mg(2+) site is built by Ser-231 and Thr-252. (6S)-5-formyl-5,6,7,8-tetrahydrofolate is bound at residue Lys-445.

This sequence belongs to the TRAFAC class TrmE-Era-EngA-EngB-Septin-like GTPase superfamily. TrmE GTPase family. Homodimer. Heterotetramer of two MnmE and two MnmG subunits. K(+) is required as a cofactor.

Its subcellular location is the cytoplasm. Its function is as follows. Exhibits a very high intrinsic GTPase hydrolysis rate. Involved in the addition of a carboxymethylaminomethyl (cmnm) group at the wobble position (U34) of certain tRNAs, forming tRNA-cmnm(5)s(2)U34. The chain is tRNA modification GTPase MnmE from Anaplasma phagocytophilum (strain HZ).